We begin with the raw amino-acid sequence, 88 residues long: Small integral membrane protein 13 (88 aa).

Residues 10-30 traverse the membrane as a helical segment; that stretch reads LVFVATLLIVLLLMVCGWYFV. Polar residues predominate over residues 48–61; it reads TGSQEGDNEQPSGS. The segment at 48-88 is disordered; that stretch reads TGSQEGDNEQPSGSETEEDPSASPQKIRSARQRRPPVDAGH. Phosphoserine occurs at positions 59 and 61. The residue at position 63 (Thr-63) is a Phosphothreonine. Ser-70 carries the post-translational modification Phosphoserine.

Belongs to the SMIM13 family.

The protein resides in the membrane. This is Small integral membrane protein 13 (Smim13) from Mus musculus (Mouse).